The following is a 195-amino-acid chain: Pyruvoyl-dependent arginine decarboxylase AaxB (195 aa).

Ser-53 carries the post-translational modification Pyruvic acid (Ser).

Belongs to the pyruvoyl-dependent arginine decarboxylase family. Trimer of an alpha-beta dimer. It depends on pyruvate as a cofactor.

Its subcellular location is the cytoplasm. The enzyme catalyses L-arginine + H(+) = agmatine + CO2. Part of the AaxABC system, catalyzes the decarboxylation of L-arginine. The arginine uptake by the bacterium in the macrophage may be a virulence factor against the host innate immune response. The sequence is that of Pyruvoyl-dependent arginine decarboxylase AaxB (aaxB) from Chlamydia abortus (strain DSM 27085 / S26/3) (Chlamydophila abortus).